Here is a 515-residue protein sequence, read N- to C-terminus: ATP synthase subunit alpha (515 aa).

171 to 178 (GDRQTGKT) contacts ATP.

The protein belongs to the ATPase alpha/beta chains family. F-type ATPases have 2 components, CF(1) - the catalytic core - and CF(0) - the membrane proton channel. CF(1) has five subunits: alpha(3), beta(3), gamma(1), delta(1), epsilon(1). CF(0) has three main subunits: a(1), b(2) and c(9-12). The alpha and beta chains form an alternating ring which encloses part of the gamma chain. CF(1) is attached to CF(0) by a central stalk formed by the gamma and epsilon chains, while a peripheral stalk is formed by the delta and b chains.

The protein localises to the cell inner membrane. It carries out the reaction ATP + H2O + 4 H(+)(in) = ADP + phosphate + 5 H(+)(out). Produces ATP from ADP in the presence of a proton gradient across the membrane. The alpha chain is a regulatory subunit. The protein is ATP synthase subunit alpha of Xylella fastidiosa (strain M12).